Reading from the N-terminus, the 196-residue chain is Large ribosomal subunit protein eL15 (196 aa).

2 stretches are compositionally biased toward basic residues: residues 160-172 (ATRG…RKGR) and 186-196 (PSIRAHKSRGK). A disordered region spans residues 160 to 196 (ATRGKTSAGRKGRGMSTRGKGTEKTRPSIRAHKSRGK).

It belongs to the eukaryotic ribosomal protein eL15 family.

This Methanosarcina mazei (strain ATCC BAA-159 / DSM 3647 / Goe1 / Go1 / JCM 11833 / OCM 88) (Methanosarcina frisia) protein is Large ribosomal subunit protein eL15 (rpl15e).